We begin with the raw amino-acid sequence, 200 residues long: Protein Nef (200 aa).

The N-myristoyl glycine; by host moiety is linked to residue Gly-2. Phosphoserine; by host is present on Ser-6. The segment at 58 to 60 is acidic; interacts with host PACS1 and PACS2; stabilizes the interaction of NEF/MHC-I with host AP1M1; necessary for MHC-I internalization; that stretch reads EEE. Positions 64–73 are SH3-binding; interaction with Src family tyrosine kinases; sequence PVRPQVPLRP. The short motif at 67-70 is the PxxP; stabilizes the interaction of NEF/MHC-I with host AP1M1; necessary for MHC-I internalization element; that stretch reads PQVP. Positions 103–119 are mediates dimerization, Nef-PTE1 interaction; that stretch reads EILDLWVYHTQGYFPDW. A binding to ATP6V1H region spans residues 143–175; sequence VDPEEVEKANEGENNCLLHPMSLHGMEDDDKEV. Residues 159–160 carry the Dileucine internalization motif; necessary for CD4 internalization motif; it reads LL. The short motif at 169–170 is the Diacidic; necessary for CD4 internalization element; the sequence is ED.

It belongs to the lentivirus primate group Nef protein family. Monomer; cytosolic form. Homodimer; membrane bound form. Interacts with Nef associated p21-activated kinase (PAK2); this interaction activates PAK2. Associates with the Nef-MHC-I-AP1 complex; this complex is required for MHC-I internalization. Interacts (via C-terminus) with host PI3-kinase. Interacts with host PACS1; this interaction seems to be weak. Interacts with host PACS2. Interacts with host LCK and MAPK3; these interactions inhibit the kinase activity of the latter. Interacts with host ATP6V1H; this interaction may play a role in CD4 endocytosis. Associates with the CD4-Nef-AP2 complex; this complex is required for CD4 internalization. Interacts with host AP2 subunit alpha and AP2 subunit sigma2. Interacts with TCR-zeta chain; this interaction up-regulates the Fas ligand (FasL) surface expression. Interacts with host HCK, LYN, and SRC; these interactions activate the Src family kinases. Interacts with MAP3K5; this interaction inhibits the Fas and TNFR-mediated death signals. Interacts with beta-COP and PTE1. Interacts with human RACK1; this increases Nef phosphorylation by PKC. Interacts with TP53; this interaction decreases the half-life of TP53, protecting the infected cell against p53-mediated apoptosis. The virion-associated Nef proteins are cleaved by the viral protease to release the soluble C-terminal core protein. Nef is probably cleaved concomitantly with viral structural proteins on maturation of virus particles. Post-translationally, myristoylated. In terms of processing, phosphorylated on serine residues, probably by host PKCdelta and theta.

It is found in the host cell membrane. The protein localises to the virion. Its subcellular location is the secreted. It localises to the host Golgi apparatus membrane. Its function is as follows. Factor of infectivity and pathogenicity, required for optimal virus replication. Alters numerous pathways of T-lymphocyte function and down-regulates immunity surface molecules in order to evade host defense and increase viral infectivity. Alters the functionality of other immunity cells, like dendritic cells, monocytes/macrophages and NK cells. In infected CD4(+) T-lymphocytes, down-regulates the surface MHC-I, mature MHC-II, CD4, CD28, CCR5 and CXCR4 molecules. Mediates internalization and degradation of host CD4 through the interaction of with the cytoplasmic tail of CD4, the recruitment of AP-2 (clathrin adapter protein complex 2), internalization through clathrin coated pits, and subsequent transport to endosomes and lysosomes for degradation. Diverts host MHC-I molecules to the trans-Golgi network-associated endosomal compartments by an endocytic pathway to finally target them for degradation. MHC-I down-regulation may involve AP-1 (clathrin adapter protein complex 1) or possibly Src family kinase-ZAP70/Syk-PI3K cascade recruited by PACS2. In consequence infected cells are masked for immune recognition by cytotoxic T-lymphocytes. Decreasing the number of immune receptors also prevents reinfection by more HIV particles (superinfection). Down-regulates host SERINC3 and SERINC5 thereby excluding these proteins from the viral particles. Virion infectivity is drastically higher when SERINC3 or SERINC5 are excluded from the viral envelope, because these host antiviral proteins impair the membrane fusion event necessary for subsequent virion penetration. In terms of biological role, bypasses host T-cell signaling by inducing a transcriptional program nearly identical to that of anti-CD3 cell activation. Interaction with TCR-zeta chain up-regulates the Fas ligand (FasL). Increasing surface FasL molecules and decreasing surface MHC-I molecules on infected CD4(+) cells send attacking cytotoxic CD8+ T-lymphocytes into apoptosis. Functionally, plays a role in optimizing the host cell environment for viral replication without causing cell death by apoptosis. Protects the infected cells from apoptosis in order to keep them alive until the next virus generation is ready to strike. Inhibits the Fas and TNFR-mediated death signals by blocking MAP3K5/ASK1. Decreases the half-life of TP53, protecting the infected cell against p53-mediated apoptosis. Inhibits the apoptotic signals regulated by the Bcl-2 family proteins through the formation of a Nef/PI3-kinase/PAK2 complex that leads to activation of PAK2 and induces phosphorylation of host BAD. Its function is as follows. Extracellular Nef protein targets CD4(+) T-lymphocytes for apoptosis by interacting with CXCR4 surface receptors. This is Protein Nef from Homo sapiens (Human).